The chain runs to 955 residues: Isoleucine--tRNA ligase (955 aa).

A 'HIGH' region motif is present at residues 58–68 (IYANGDIHIGH). Glu552 is an L-isoleucyl-5'-AMP binding site. The 'KMSKS' region signature appears at 593–597 (KMSKS). Residue Lys596 participates in ATP binding. The Zn(2+) site is built by Cys918, Cys921, Cys938, and Cys941.

It belongs to the class-I aminoacyl-tRNA synthetase family. IleS type 1 subfamily. In terms of assembly, monomer. The cofactor is Zn(2+).

The protein localises to the cytoplasm. The enzyme catalyses tRNA(Ile) + L-isoleucine + ATP = L-isoleucyl-tRNA(Ile) + AMP + diphosphate. Catalyzes the attachment of isoleucine to tRNA(Ile). As IleRS can inadvertently accommodate and process structurally similar amino acids such as valine, to avoid such errors it has two additional distinct tRNA(Ile)-dependent editing activities. One activity is designated as 'pretransfer' editing and involves the hydrolysis of activated Val-AMP. The other activity is designated 'posttransfer' editing and involves deacylation of mischarged Val-tRNA(Ile). This chain is Isoleucine--tRNA ligase, found in Vesicomyosocius okutanii subsp. Calyptogena okutanii (strain HA).